The chain runs to 155 residues: Ribosome maturation factor RimP (155 aa).

This sequence belongs to the RimP family.

The protein localises to the cytoplasm. Its function is as follows. Required for maturation of 30S ribosomal subunits. The protein is Ribosome maturation factor RimP of Prochlorococcus marinus (strain MIT 9312).